An 852-amino-acid polypeptide reads, in one-letter code: Genome polyprotein (852 aa).

2 consecutive short sequence motifs ((L)YPX(n)L motif) follow at residues 167 to 171 and 200 to 205; these read YPHGL and YPVWEL. The segment at 766 to 836 is involved in P1-2A pentamerization; it reads MMSRIAAGDL…PRKMKGLFSQ (71 aa).

Belongs to the picornaviridae polyprotein family. In terms of assembly, homodimer. Homomultimer; probably interacts with membranes in a multimeric form. Seems to assemble into amyloid-like fibers. As to quaternary structure, homopentamer. Homooligomer. Interacts with capsid protein VP2. Interacts with capsid protein VP3. In terms of assembly, interacts with capsid protein VP1. Interacts with capsid protein VP3. As to quaternary structure, interacts with capsid protein VP1. Interacts with capsid protein VP2. Post-translationally, specific enzymatic cleavages by viral protease in vivo yield a variety of precursors and mature proteins. Polyprotein processing intermediates are produced, such as P1-2A which is a functional precursor of the structural proteins, VP0 which is a VP4-VP2 precursor, VP1-2A precursor, 3ABC precursor which is a stable and catalytically active precursor of 3A, 3B and 3C proteins, 3AB and 3CD precursors. The assembly signal 2A is removed from VP1-2A by a host protease, possibly host Cathepsin L. This cleavage occurs over a region of 3 amino-acids probably generating VP1 proteins with heterogeneous C-termini. In terms of processing, during virion maturation, immature virions are rendered infectious following cleavage of VP0 into VP4 and VP2. This maturation seems to be an autocatalytic event triggered by the presence of RNA in the capsid and is followed by a conformational change of the particle. The assembly signal 2A is removed from VP1-2A by a host protease, possibly host Cathepsin L in naked virions. This cleavage does not occur in enveloped virions. This cleavage occurs over a region of 3 amino-acids probably generating VP1 proteins with heterogeneous C-termini. Post-translationally, viral protein genome-linked: VPg is uridylylated prior to priming replication into VPg-pUpU. In terms of processing, unlike other picornaviruses, does not seem to be myristoylated.

It is found in the virion. It localises to the host endosome. The protein resides in the host multivesicular body. Its subcellular location is the host membrane. Functionally, capsid proteins VP1, VP2, and VP3 form a closed capsid enclosing the viral positive strand RNA genome. All these proteins contain a beta-sheet structure called beta-barrel jelly roll. Together they form an icosahedral capsid (T=3) composed of 60 copies of each VP1, VP2, and VP3, with a diameter of approximately 300 Angstroms. VP1 is situated at the 12 fivefold axes, whereas VP2 and VP3 are located at the quasi-sixfold axes. The naked capsid interacts with the host receptor HAVCR1 to provide virion attachment to and probably entry into the target cell. In terms of biological role, VP0 precursor is a component of the immature procapsids. Plays a role in the assembly of the 12 pentamers into an icosahedral structure. Has not been detected in mature virions, supposedly owing to its small size. Its function is as follows. Precursor component of immature procapsids that corresponds to an extended form of the structural protein VP1. After maturation, possibly by the host Cathepsin L, the assembly signal 2A is cleaved to give rise to the mature VP1 protein. Functionally, affects membrane integrity and causes an increase in membrane permeability. In terms of biological role, functions as a viroporin. Affects membrane integrity and causes an increase in membrane permeability. Involved in host intracellular membrane rearrangements probably to give rise to the viral factories. Does not disrupt calcium homeostasis or glycoprotein trafficking. Antagonizes the innate immune response of the host by suppressing IFN-beta synthesis, which it achieves by interfering with the RIG-I/IFIH1 pathway. This chain is Genome polyprotein, found in Cercopithecus hamlyni (Owl-faced monkey).